Consider the following 1214-residue polypeptide: Sodium bicarbonate cotransporter 3 (1214 aa).

The span at 1–12 (MERFRLEKKLPG) shows a compositional bias: basic and acidic residues. Disordered stretches follow at residues 1–22 (MERFRLEKKLPGPDEEAVVDLG) and 52–93 (SKES…PSQR). Residues 1–608 (MERFRLEKKL…DFKDALSLQC (608 aa)) lie on the Extracellular side of the membrane. A phosphoserine mark is found at Ser-52, Ser-55, Ser-84, Ser-150, Leu-165, and Cys-168. Over residues 55 to 72 (SRRRHRHRGHKHHHRRRK) the composition is skewed to basic residues. Over residues 73–85 (DKESDKEDGRESP) the composition is skewed to basic and acidic residues. Asn-171 is a glycosylation site (N-linked (GlcNAc...) asparagine). 8 positions are modified to phosphoserine: Ser-233, Ser-242, Ser-255, Arg-258, Ser-260, Thr-263, Gly-264, and Ala-267. A glycan (N-linked (GlcNAc...) asparagine) is linked at Asn-269. Disordered stretches follow at residues 289 to 346 (SRAG…IPTV), 362 to 408 (EEQK…ENST), and 552 to 572 (FHNGSTPTLGETPKEAAHHAG). A compositionally biased stretch (pro residues) spans 303–313 (VPTPQNSPPSS). The span at 314–332 (PSISRLTSRSSQESQRQAP) shows a compositional bias: low complexity. Residues 379–392 (SPQSAPGNLDNSKS) show a composition bias toward polar residues. Ser-382 carries the post-translational modification Phosphoserine. N-linked (GlcNAc...) asparagine glycosylation is present at Asn-398. Residues Ser-400 and Ser-403 each carry the phosphoserine modification. Asn-406 carries an N-linked (GlcNAc...) asparagine glycan. 2 positions are modified to phosphoserine: Ser-407 and Ser-556. Thr-557 is subject to Phosphothreonine. A compositionally biased stretch (basic and acidic residues) spans 563 to 572 (TPKEAAHHAG). The helical transmembrane segment at 609–629 (LASILFLYCACMSPVITFGGL) threads the bilayer. Over 630-637 (LGEATEGR) the chain is Cytoplasmic. Residues 638–658 (ISAIESLFGASLTGIAYSLFA) traverse the membrane as a helical segment. Residues 659 to 695 (GQPLTILGSTGPVLVFEKILYKFCRDYQLSYLSLRTS) lie on the Extracellular side of the membrane. Residues 696–716 (IGLWTSFLCIVLVATDASSLV) traverse the membrane as a helical segment. Residues 717–725 (CYITRFTEE) are Cytoplasmic-facing. Residues 726–746 (AFAALICIIFIYEALEKLFDL) traverse the membrane as a helical segment. Lys-742 carries the phosphoserine modification. The Extracellular segment spans residues 747 to 817 (GETYAFNMHN…VFLGSACGHH (71 aa)). The cysteines at positions 766 and 768 are disulfide-linked. A phosphoserine mark is found at Pro-771 and Pro-774. An N-linked (GlcNAc...) asparagine glycan is attached at Asn-776. A Phosphoserine modification is found at Ala-780. Residues Asn-786 and Asn-791 are each glycosylated (N-linked (GlcNAc...) asparagine). A disulfide bridge connects residues Cys-802 and Cys-814. The chain crosses the membrane as a helical span at residues 818–838 (GPYIPDVLFWCVILFFTTFFL). Residues 839-861 (SSFLKQFKTKRYFPTKVRSTISD) are Cytoplasmic-facing. A helical transmembrane segment spans residues 862-882 (FAVFLTIVIMVTIDYLVGVPS). Residues 883-908 (PKLHVPEKFEPTHPERGWIISPLGDN) lie on the Extracellular side of the membrane. The helical transmembrane segment at 909–929 (PWWTLLIAAIPALLCTILIFM) threads the bilayer. Residues 930-954 (DQQITAVIINRKEHKLKKGAGYHLD) are Cytoplasmic-facing. A helical transmembrane segment spans residues 955–975 (LLMVGVMLGVCSVMGLPWFVA). Over 976–1011 (ATVLSISHVNSLKVESECSAPGEQPKFLGIREQRVT) the chain is Extracellular. Phosphoserine is present on residues Glu-1007, Val-1010, and Phe-1016. Essential for cell membrane localization and transport activity regions lie at residues 1008 to 1131 (QRVT…KREL) and 1127 to 1214 (TKRE…ETSL). Residues 1012–1032 (GLMIFILMGLSVFMTSVLKFI) traverse the membrane as a helical segment. Residues 1033–1034 (PM) lie on the Cytoplasmic side of the membrane. Residues 1035–1055 (PVLYGVFLYMGVSSLKGIQLF) traverse the membrane as a helical segment. Topologically, residues 1056–1092 (DRIKLFGMPAKHQPDLIYLRYVPLWKVHIFTVIQLTC) are extracellular. Phosphoserine occurs at positions 1073, 1077, 1102, 1105, 1106, 1109, 1111, and 1115. The chain crosses the membrane as a helical span at residues 1093 to 1113 (LVLLWVIKVSAAAVVFPMMVL). The Cytoplasmic portion of the chain corresponds to 1114–1214 (ALVFVRKLMD…KKYVDAETSL (101 aa)). Residues 1134–1136 (LDD) form a CA2-binding region. The segment covering 1144–1162 (KKEDDKKKKEKEEAERMLQ) has biased composition (basic and acidic residues). The disordered stretch occupies residues 1144 to 1169 (KKEDDKKKKEKEEAERMLQDDDDTVH). Thr-1167 is modified (phosphothreonine). Residues Ser-1176, Ser-1188, Asp-1201, and Ser-1213 each carry the phosphoserine modification. The short motif at 1211–1214 (ETSL) is the PDZ-binding element.

The protein belongs to the anion exchanger (TC 2.A.31) family. Interacts with CFTR through NHERF1/EBP50. Interacts with USH1C. Forms a complex with ATP6V1B1 and NHERF1/EBP50. Interacts in a pH dependent-manner with CA2/carbonic anhydrase 2. As to expression, highly expressed in testis and spleen. Also expressed in retina, colon, small intestine, ovary, thymus, prostate, muscle, heart and kidney. Expressed in skeletal muscle and heart muscle.

The protein resides in the basolateral cell membrane. Its subcellular location is the apical cell membrane. It is found in the cell projection. The protein localises to the stereocilium. It localises to the cell membrane. It catalyses the reaction hydrogencarbonate(in) + Na(+)(in) = hydrogencarbonate(out) + Na(+)(out). Transporter activity is regulated by CA2/carbonic anhydrase 2, cAMP and PKA. Insensitive to stilbene derivatives. Inhibited by 5-(N-ethyl-N-isopropyl)-amiloride (EIPA). In terms of biological role, electroneutral sodium- and bicarbonate-dependent cotransporter with a Na(+):HCO3(-) 1:1 stoichiometry. Mediates the sodium-dependent bicarbonate transport important for pH recovery after acid load as well as for regulation of steady-state pH in the duodenum and vascular smooth muscle cells. Plays a key role in macrophage acidification, mediating bicarbonate import into the cytoplasm which is crucial for net acid extrusion and maintenance of cytoplasmic pH during phagocytosis. Provides cellular bicarbonate for de novo purine and pyrimidine synthesis and is a key mediator of de novo nucleotide synthesis downstream of mTORC1 signaling in proliferating cells. Functionally, plays a key role in macrophage acidification, mediating bicarbonate import into the cytoplasm which is crucial for net acid extrusion and maintenance of cytoplasmic pH during phagocytosis. The sequence is that of Sodium bicarbonate cotransporter 3 (SLC4A7) from Homo sapiens (Human).